A 407-amino-acid chain; its full sequence is 1-deoxy-D-xylulose 5-phosphate reductoisomerase (407 aa).

T25, G26, S27, I28, N53, and N136 together coordinate NADPH. K137 serves as a coordination point for 1-deoxy-D-xylulose 5-phosphate. E138 contributes to the NADPH binding site. Mn(2+) is bound at residue D162. 1-deoxy-D-xylulose 5-phosphate is bound by residues S163, E164, S188, and H211. E164 serves as a coordination point for Mn(2+). G217 serves as a coordination point for NADPH. 1-deoxy-D-xylulose 5-phosphate contacts are provided by S224, N229, K230, and E233. E233 is a Mn(2+) binding site.

This sequence belongs to the DXR family. Requires Mg(2+) as cofactor. Mn(2+) is required as a cofactor.

The enzyme catalyses 2-C-methyl-D-erythritol 4-phosphate + NADP(+) = 1-deoxy-D-xylulose 5-phosphate + NADPH + H(+). It functions in the pathway isoprenoid biosynthesis; isopentenyl diphosphate biosynthesis via DXP pathway; isopentenyl diphosphate from 1-deoxy-D-xylulose 5-phosphate: step 1/6. Functionally, catalyzes the NADPH-dependent rearrangement and reduction of 1-deoxy-D-xylulose-5-phosphate (DXP) to 2-C-methyl-D-erythritol 4-phosphate (MEP). This chain is 1-deoxy-D-xylulose 5-phosphate reductoisomerase, found in Nitrobacter winogradskyi (strain ATCC 25391 / DSM 10237 / CIP 104748 / NCIMB 11846 / Nb-255).